Reading from the N-terminus, the 64-residue chain is MTKGTPSQGKHNKGSNHIVCRRCGRRAFHVRKKVCAACGFGRSSKIKRFAWQWKKVTGKGNRVK.

Zn(2+) is bound by residues cysteine 20, cysteine 23, cysteine 35, and cysteine 38. Residues 20–38 (CRRCGRRAFHVRKKVCAAC) form a C4-type zinc finger.

Belongs to the eukaryotic ribosomal protein eL37 family. Zn(2+) serves as cofactor.

Functionally, binds to the 23S rRNA. The sequence is that of Large ribosomal subunit protein eL37 from Methanococcus maripaludis (strain DSM 14266 / JCM 13030 / NBRC 101832 / S2 / LL).